The primary structure comprises 2005 residues: Sodium channel protein type 2 subunit alpha (2005 aa).

Residues 1–129 (MARSVLVPPG…KLAIKILVHS (129 aa)) lie on the Cytoplasmic side of the membrane. Position 4 is a phosphoserine (S4). Positions 28–61 (RIAEEKAKRPKQERKDEDDENGPKPNSDLEAGKS) are disordered. K38 is covalently cross-linked (Glycyl lysine isopeptide (Lys-Gly) (interchain with G-Cter in SUMO1)). The I repeat unit spans residues 111-456 (ILTPFNPIRK…QQMLEQLKKQ (346 aa)). The chain crosses the membrane as a helical span at residues 130-148 (LFNVLIMCTILTNCVFMTM). Residues 149-155 (SNPPDWT) lie on the Extracellular side of the membrane. Residues 156 to 176 (KNVEYTFTGIYTFESLIKILA) form a helical membrane-spanning segment. Topologically, residues 177 to 190 (RGFCLEDFTFLRNP) are cytoplasmic. The helical transmembrane segment at 191–208 (WNWLDFTVITFAYVTEFV) threads the bilayer. Residues 209-214 (NLGNVS) lie on the Extracellular side of the membrane. A glycan (N-linked (GlcNAc...) asparagine) is linked at N212. A helical membrane pass occupies residues 215-231 (ALRTFRVLRALKTISVI). Topologically, residues 232-250 (PGLKTIVGALIQSVKKLSD) are cytoplasmic. Residues 251–270 (VMILTVFCLSVFALIGLQLF) form a helical membrane-spanning segment. The Extracellular portion of the chain corresponds to 271–369 (MGNLRNKCLQ…PNYGYTSFDT (99 aa)). The cysteines at positions 278 and 338 are disulfide-linked. Residues N285, N291, N297, N303, N308, and N340 are each glycosylated (N-linked (GlcNAc...) asparagine). Residues 370–394 (FSWAFLSLFRLMTQDFWENLYQLTL) constitute an intramembrane region (pore-forming). The Extracellular segment spans residues 395–401 (RAAGKTY). The helical transmembrane segment at 402-422 (MIFFVLVIFLGSFYLINLILA) threads the bilayer. Topologically, residues 423–759 (VVAMAYEEQN…HVVNLVVMDP (337 aa)) are cytoplasmic. A phosphoserine mark is found at S468, S471, S484, S526, S528, S531, S553, S554, and S558. The tract at residues 494 to 529 (SSKSEKELKNRRKKKKQKEQAGEEEKEDAVRKSASE) is disordered. Positions 511–529 (KEQAGEEEKEDAVRKSASE) are enriched in basic and acidic residues. At S554 the chain carries Phosphoserine; by PKC; in vitro. Phosphoserine; by PKC; in vitro is present on residues S573 and S576. Residues S589, S610, S623, S687, S688, and S721 each carry the phosphoserine modification. The disordered stretch occupies residues 591 to 634 (NDFADDEHSTFEDNDSRRDSLFVPHRHGERRPSNVSQASRASRG). Positions 596–610 (DEHSTFEDNDSRRDS) are enriched in basic and acidic residues. The stretch at 741–1013 (CCKPWLKVKH…QIAVGRMQKG (273 aa)) is one II repeat. Residues 760-778 (FVDLAITICIVLNTLFMAM) traverse the membrane as a helical segment. Residues 779–789 (EHYPMTEQFSS) lie on the Extracellular side of the membrane. The chain crosses the membrane as a helical span at residues 790–809 (VLSVGNLVFTGIFTAEMFLK). Over 810 to 823 (IIAMDPYYYFQEGW) the chain is Cytoplasmic. Residues 824 to 843 (NIFDGFIVSLSLMELGLANV) form a helical membrane-spanning segment. The Extracellular portion of the chain corresponds to 844-845 (EG). A helical transmembrane segment spans residues 846–863 (LSVLRSFRLLRVFKLAKS). Residues 864–879 (WPTLNMLIKIIGNSVG) are Cytoplasmic-facing. The helical transmembrane segment at 880–898 (ALGNLTLVLAIIVFIFAVV) threads the bilayer. Topologically, residues 899–927 (GMQLFGKSYKECVCKISNDCELPRWHMHH) are extracellular. C912 and C918 are joined by a disulfide. The interval 917 to 918 (DC) is binds SCN2B. The segment at residues 928–948 (FFHSFLIVFRVLCGEWIETMW) is an intramembrane region (pore-forming). Residues 949–961 (DCMEVAGQTMCLT) lie on the Extracellular side of the membrane. An intrachain disulfide couples C950 to C959. Residues 962–982 (VFMMVMVIGNLVVLNLFLALL) traverse the membrane as a helical segment. At 983-1209 (LSSFSSDNLA…TCYKIVEHNW (227 aa)) the chain is on the cytoplasmic side. The segment at 1120–1166 (EEFSSESDMEESKEKLNATSSSEGSTVDIGAPAEGEQPEAEPEESLE) is disordered. Over residues 1155–1166 (EQPEAEPEESLE) the composition is skewed to acidic residues. Residues 1190 to 1504 (KGKLWWNLRK…KKYYNAMKKL (315 aa)) form an III repeat. A helical membrane pass occupies residues 1210–1227 (FETFIVFMILLSSGALAF). Topologically, residues 1228–1240 (EDIYIEQRKTIKT) are extracellular. A helical membrane pass occupies residues 1241-1259 (MLEYADKVFTYIFILEMLL). At 1260-1273 (KWVAYGFQMYFTNA) the chain is on the cytoplasmic side. The helical transmembrane segment at 1274–1292 (WCWLDFLIVDVSLVSLTAN) threads the bilayer. Residues 1293 to 1300 (ALGYSELG) are Extracellular-facing. Residues 1301–1319 (AIKSLRTLRALRPLRALSR) form a helical membrane-spanning segment. Over 1320–1336 (FEGMRVVVNALLGAIPS) the chain is Cytoplasmic. Residues 1337–1356 (IMNVLLVCLIFWLIFSIMGV) traverse the membrane as a helical segment. The Extracellular portion of the chain corresponds to 1357 to 1408 (NLFAGKFYHCINYTTGEMFDVSVVNNYSECQALIESNQTARWKNVKVNFDNV). C1366 and C1386 are disulfide-bonded. N1368, N1382, and N1393 each carry an N-linked (GlcNAc...) asparagine glycan. An intramembrane region (pore-forming) is located at residues 1409 to 1430 (GLGYLSLLQVATFKGWMDIMYA). The Extracellular portion of the chain corresponds to 1431–1447 (AVDSRNVELQPKYEDNL). Residues 1448–1469 (YMYLYFVIFIIFGSFFTLNLFI) form a helical membrane-spanning segment. At 1470 to 1532 (GVIIDNFNQQ…MVFDFVTKQV (63 aa)) the chain is on the cytoplasmic side. Position 1506 is a phosphoserine; by PKC (S1506). Residues 1513 to 1811 (IPRPANKFQG…WEKFDPDATQ (299 aa)) form an IV repeat. A helical membrane pass occupies residues 1533–1550 (FDISIMILICLNMVTMMV). Residues 1551 to 1561 (ETDDQSQEMTN) are Extracellular-facing. A helical membrane pass occupies residues 1562–1580 (ILYWINLVFIVLFTGECVL). The Cytoplasmic portion of the chain corresponds to 1581-1592 (KLISLRHYYFTI). Residues 1593–1610 (GWNIFDFVVVILSIVGMF) form a helical membrane-spanning segment. Over 1611 to 1623 (LAELIEKYFVSPT) the chain is Extracellular. The chain crosses the membrane as a helical span at residues 1624–1640 (LFRVIRLARIGRILRLI). At 1641-1659 (KGAKGIRTLLFALMMSLPA) the chain is on the cytoplasmic side. A helical transmembrane segment spans residues 1660-1677 (LFNIGLLLFLVMFIYAIF). Over 1678 to 1699 (GMSNFAYVKREVGIDDMFNFET) the chain is Extracellular. An intramembrane region (pore-forming) is located at residues 1700–1722 (FGNSMICLFQITTSAGWDGLLAP). At 1723–1752 (ILNSGPPDCDPEKDHPGSSVKGDCGNPSVG) the chain is on the extracellular side. A disulfide bridge links C1731 with C1746. The helical transmembrane segment at 1753 to 1775 (IFFFVSYIIISFLVVVNMYIAVI) threads the bilayer. The Cytoplasmic segment spans residues 1776 to 2005 (LENFSVATEE…KGKDIRESKK (230 aa)). In terms of domain architecture, IQ spans 1905 to 1934 (EEVSAIVIQRAYRRYLLKQKVKKVSSIYKK). A Phosphoserine modification is found at S1930. Positions 1933 to 1964 (KKDKGKEDEGTPIKEDIITDKLNENSTPEKTD) are enriched in basic and acidic residues. A disordered region spans residues 1933–2005 (KKDKGKEDEG…KGKDIRESKK (73 aa)). 3 positions are modified to phosphothreonine: T1943, T1963, and T1966. A Phosphoserine modification is found at S1971. Over residues 1979-2005 (TKPEKEKFEKDKSEKEDKGKDIRESKK) the composition is skewed to basic and acidic residues.

This sequence belongs to the sodium channel (TC 1.A.1.10) family. Nav1.2/SCN2A subfamily. As to quaternary structure, heterooligomer of a large alpha subunit and a smaller beta subunit. Heterooligomer with SCN2B or SCN4B; disulfide-linked. Heterooligomer with SCN1B or SCN3B; non-covalently linked. Interacts with NEDD4L. Interacts with CALM. Interacts with TMEM233. Interacts with the conotoxin GVIIJ. Interacts with the scorpion toxin BMK M1. Post-translationally, may be ubiquitinated by NEDD4L; which would promote its endocytosis. In terms of processing, phosphorylation at Ser-1506 by PKC in a highly conserved cytoplasmic loop slows inactivation of the sodium channel and reduces peak sodium currents. Sumoylated at Lys-38. Sumoylation is induced by hypoxia, increases voltage-gated sodium current and mediates the early response to acute hypoxia in neurons. Sumoylated SCN2A is located at the cell membrane. Expressed in brain (at protein level). Expressed in cerebellar granule neurons (at protein level).

The protein localises to the cell membrane. The enzyme catalyses Na(+)(in) = Na(+)(out). Functionally, mediates the voltage-dependent sodium ion permeability of excitable membranes. Assuming opened or closed conformations in response to the voltage difference across the membrane, the protein forms a sodium-selective channel through which Na(+) ions may pass in accordance with their electrochemical gradient. Implicated in the regulation of hippocampal replay occurring within sharp wave ripples (SPW-R) important for memory. In Rattus norvegicus (Rat), this protein is Sodium channel protein type 2 subunit alpha.